The sequence spans 340 residues: UDP-N-acetylenolpyruvoylglucosamine reductase (340 aa).

An FAD-binding PCMH-type domain is found at 11 to 181 (ISVKAKKIIS…VAIGLKLKKK (171 aa)). Arginine 156 is a catalytic residue. Residue serine 227 is the Proton donor of the active site. Glutamate 323 is a catalytic residue.

Belongs to the MurB family. Requires FAD as cofactor.

The protein localises to the cytoplasm. It carries out the reaction UDP-N-acetyl-alpha-D-muramate + NADP(+) = UDP-N-acetyl-3-O-(1-carboxyvinyl)-alpha-D-glucosamine + NADPH + H(+). It functions in the pathway cell wall biogenesis; peptidoglycan biosynthesis. Functionally, cell wall formation. This Wigglesworthia glossinidia brevipalpis protein is UDP-N-acetylenolpyruvoylglucosamine reductase.